Consider the following 386-residue polypeptide: Oxysterol-binding protein-related protein 4A (386 aa).

Belongs to the OSBP family. Expressed in roots, stems and flowers.

May be involved in the transport of sterols. In Arabidopsis thaliana (Mouse-ear cress), this protein is Oxysterol-binding protein-related protein 4A (ORP4A).